The primary structure comprises 312 residues: Olfactory receptor 10D3 (312 aa).

The Extracellular segment spans residues 1–26; that stretch reads MEVKNCCMVTEFILLGIPHTEGLEMT. A helical membrane pass occupies residues 27-47; sequence LFVLFLPFYACTLLGNVSILV. At 48-57 the chain is on the cytoplasmic side; sequence AVMSSARLHT. Residues 58 to 78 traverse the membrane as a helical segment; the sequence is PMYFFLGNLSVFDMGFSSVTC. At 79 to 97 the chain is on the extracellular side; sequence PKMLLYLMGLSRLISYKDC. Cysteines 97 and 179 form a disulfide. A helical membrane pass occupies residues 98 to 118; sequence VCQLFFFHFLGSIECFLFTVM. The Cytoplasmic portion of the chain corresponds to 119–139; that stretch reads AYDRFTAICYPLRYTVIMNPR. Residues 140 to 160 traverse the membrane as a helical segment; the sequence is ICVALAVGTWLLGCIHSSILT. Over 161-197 the chain is Extracellular; the sequence is SLTFTLPYCGPNEVDHFFCDIPALLPLACADTSLAQR. A helical transmembrane segment spans residues 198–218; the sequence is VSFTNVGLISLVCFLLILLSY. At 219-239 the chain is on the cytoplasmic side; sequence TRITISILSIRTTEGRRRAFS. Residues 240 to 260 traverse the membrane as a helical segment; sequence TCSAHLIAILCAYGPIITVYL. At 261-266 the chain is on the extracellular side; sequence QPTPNP. The chain crosses the membrane as a helical span at residues 267–287; that stretch reads MLGTVVQILMNLVGPMLNPLI. The Cytoplasmic segment spans residues 288 to 312; that stretch reads YTLRNKEVKTALKTILHRTGHVPES.

It belongs to the G-protein coupled receptor 1 family.

The protein localises to the cell membrane. In terms of biological role, odorant receptor. This is Olfactory receptor 10D3 from Homo sapiens (Human).